We begin with the raw amino-acid sequence, 319 residues long: Mitochondrial fission regulator 1-like (319 aa).

The tract at residues 1 to 35 (MASLGAGAEPESVLFGKDGTEACESPEGRRSGRRK) is disordered.

Belongs to the MTFR1 family.

It is found in the mitochondrion outer membrane. Mitochondrial protein required for adaptation of miochondrial dynamics to metabolic changes. Regulates mitochondrial morphology at steady state and mediates AMPK-dependent stress-induced mitochondrial fragmentation via the control of OPA1 levels. This is Mitochondrial fission regulator 1-like (mtfr1l) from Xenopus tropicalis (Western clawed frog).